A 547-amino-acid polypeptide reads, in one-letter code: MAAKDVKFGNEARVKMLRGVNVLADAVKVTLGPKGRNVVLDKSFGAPSITKDGVSVAREIELEDKFENMGAQMVKEVASKANDVAGDGTTTATLLAQAIVNEGLKAVAAGMNPMDLKRGIDKAVINAVSELKQLSVPCLDSKAITQVGTISANADETVGTLISEAMEKVGNDGVITVEEGTGLEDELEVVKGMQFDRGYLSPYFINKPETGIVELENPYILMVDKKISNIRELLPILEAVAKSSKPLLIISEDLEGEALATLVVKSMRGIVKVAAVKAPGFGDRRKAMLQDISILTAGTLISEELAMDLEKSTLEDLGQSKRVVITKDTTTIIDGSGSKKDIKNRISQIKQQIQESTSDYDKEKLNERLAKLSGGVAVLKVGAATEVEMKEKKARVEDALHATRAAVEEGVVPGGGVALVRVAQKISKILGQNEDQNVGIRVALRAMEAPLRQIVSNSGEEPSVVTNNVKDGIGNYGYNAATDEYGDMIKFGILDPTKVTRSALQYAGSVAGLMITTECMVTDLPKEEKSDLSVPPQGGMGGMGGMM.

ATP-binding positions include 30–33, K51, 87–91, G415, 479–481, and D495; these read TLGP, DGTTT, and NAA. A disordered region spans residues 526–547; it reads KEEKSDLSVPPQGGMGGMGGMM. The span at 538–547 shows a compositional bias: gly residues; the sequence is GGMGGMGGMM.

Belongs to the chaperonin (HSP60) family. As to quaternary structure, forms a cylinder of 14 subunits composed of two heptameric rings stacked back-to-back. Interacts with the co-chaperonin GroES.

The protein localises to the cytoplasm. It catalyses the reaction ATP + H2O + a folded polypeptide = ADP + phosphate + an unfolded polypeptide.. In terms of biological role, together with its co-chaperonin GroES, plays an essential role in assisting protein folding. The GroEL-GroES system forms a nano-cage that allows encapsulation of the non-native substrate proteins and provides a physical environment optimized to promote and accelerate protein folding. The chain is Chaperonin GroEL from Buchnera aphidicola subsp. Tetraneura caerulescens.